The chain runs to 196 residues: Alpha-crystallin A chain (196 aa).

M1 bears the N-acetylmethionine mark. Residues 1–63 are required for complex formation with BFSP1 and BFSP2; that stretch reads MDVTIQHPWF…RTVLDSCISE (63 aa). Q6 is modified (deamidated glutamine; partial). S45 bears the Phosphoserine mark. Q50 bears the Deamidated glutamine; partial mark. In terms of domain architecture, sHSP spans 76–185; the sequence is HAGNPENNPI…GHSERAIPVS (110 aa). 2 positions are modified to N6-acetyllysine: K93 and K122. H123 provides a ligand contact to Zn(2+). Position 124 is a deamidated asparagine; partial (N124). Residues E125 and H130 each coordinate Zn(2+). S145 is subject to Phosphoserine. A Deamidated glutamine; partial modification is found at Q170. The disordered stretch occupies residues 170-196; sequence QSGLDAGHSERAIPVSQEEKPSSAPLF. Over residues 176–190 the composition is skewed to basic and acidic residues; that stretch reads GHSERAIPVSQEEKP. H177 contacts Zn(2+). A glycan (O-linked (GlcNAc) serine) is linked at S185.

It belongs to the small heat shock protein (HSP20) family. In terms of assembly, heteromer composed of three CRYAA and one CRYAB subunits. Inter-subunit bridging via zinc ions enhances stability, which is crucial as there is no protein turn over in the lens. Can also form homodimers and homotetramers (dimers of dimers) which serve as the building blocks of homooligomers. Within homooligomers, the zinc-binding motif is created from residues of 3 different molecules. His-123 and Glu-125 from one molecule are ligands of the zinc ion, and His-130 and His-177 residues from additional molecules complete the site with tetrahedral coordination geometry. Part of a complex required for lens intermediate filament formation composed of BFSP1, BFSP2 and CRYAA. In terms of processing, acetylation at Lys-93 may increase chaperone activity. Undergoes age-dependent proteolytical cleavage at the C-terminus.

Its subcellular location is the cytoplasm. It localises to the nucleus. Functionally, contributes to the transparency and refractive index of the lens. Acts as a chaperone, preventing aggregation of various proteins under a wide range of stress conditions. Required for the correct formation of lens intermediate filaments as part of a complex composed of BFSP1, BFSP2 and CRYAA. This chain is Alpha-crystallin A chain (CRYAA), found in Spalax ehrenbergi (Middle East blind mole rat).